We begin with the raw amino-acid sequence, 98 residues long: Small ribosomal subunit protein uS19 (98 aa).

The disordered stretch occupies residues 77 to 98 (TRTFRGHAGGKAEKGGSAPKKK).

It belongs to the universal ribosomal protein uS19 family.

Protein S19 forms a complex with S13 that binds strongly to the 16S ribosomal RNA. The chain is Small ribosomal subunit protein uS19 from Chlorobium phaeobacteroides (strain DSM 266 / SMG 266 / 2430).